The following is a 293-amino-acid chain: Iron-sulfur cluster transfer protein Nubpl (293 aa).

Residues 214–217 are CXXC motif probably involved in coordinating iron-sulfur cluster binding; it reads CQNC.

The protein belongs to the Mrp/NBP35 ATP-binding proteins family. As to quaternary structure, homodimer; dimerization is not reliant on iron-sulfur cluster binding. [4Fe-4S] cluster is required as a cofactor.

The protein localises to the mitochondrion membrane. In terms of biological role, iron-sulfur cluster transfer protein involved in the assembly of the mitochondrial membrane respiratory chain NADH dehydrogenase (Complex I). May deliver one or more Fe-S clusters to complex I subunits. Alleviates pausing in mitochondrial DNA (mtDNA) replication at slow zone 2. May be involved in mtDNA-helicase-mediated mtDNA unwinding and replication by transferring iron-sulfur clusters. The polypeptide is Iron-sulfur cluster transfer protein Nubpl (Drosophila melanogaster (Fruit fly)).